A 128-amino-acid polypeptide reads, in one-letter code: Azurin (128 aa).

The Plastocyanin-like domain maps to 1–128; that stretch reads AECKVDVDST…SMMKGAVVLK (128 aa). Cysteines 3 and 26 form a disulfide. 4 residues coordinate Cu cation: H46, C112, H117, and M121.

The protein localises to the periplasm. Transfers electrons from cytochrome c551 to cytochrome oxidase. This Pseudomonas chlororaphis (Pseudomonas aureofaciens) protein is Azurin.